The sequence spans 223 residues: Probable tRNA-splicing endonuclease subunit tsp-1 (223 aa).

The segment at 1–55 (MESGSTPPTDKQIRENEQDGTGHQGKLLARPTSTRQQQQQQQQQPSHSVSQSVSQ) is disordered. Residues 30–55 (RPTSTRQQQQQQQQQPSHSVSQSVSQ) are compositionally biased toward low complexity.

The protein belongs to the SEN15 family. TRNA splicing endonuclease is a heterotetramer composed of tsp-2/sen2, tsp-1/sen15, tsp-4/sen34 and tsp-5/sen54. Interacts directly with tsp-4/sen34.

Functionally, non-catalytic subunit of the tRNA-splicing endonuclease complex, a complex responsible for identification and cleavage of the splice sites in pre-tRNA. It cleaves pre-tRNA at the 5' and 3' splice sites to release the intron. The products are an intron and two tRNA half-molecules bearing 2',3' cyclic phosphate and 5'-OH termini. There are no conserved sequences at the splice sites, but the intron is invariably located at the same site in the gene, placing the splice sites an invariant distance from the constant structural features of the tRNA body. The chain is Probable tRNA-splicing endonuclease subunit tsp-1 (tsp-1) from Neurospora crassa (strain ATCC 24698 / 74-OR23-1A / CBS 708.71 / DSM 1257 / FGSC 987).